Reading from the N-terminus, the 552-residue chain is Solute carrier family 22 member 6-B (552 aa).

Residues M1–Y16 lie on the Cytoplasmic side of the membrane. Residues Q17 to M37 traverse the membrane as a helical segment. Residues Q38–Q137 are Extracellular-facing. Residues V138–S158 form a helical membrane-spanning segment. The Cytoplasmic portion of the chain corresponds to D159–R164. Residues P165–S184 form a helical membrane-spanning segment. A topological domain (extracellular) is located at residue P185. Residues N186–L206 form a helical membrane-spanning segment. Residues N207–S225 lie on the Cytoplasmic side of the membrane. A helical transmembrane segment spans residues T226–I246. The Extracellular segment spans residues R247–Q250. A helical membrane pass occupies residues W251–P271. Residues E272–P336 lie on the Cytoplasmic side of the membrane. The chain crosses the membrane as a helical span at residues V337–Y356. Residue Y357 is a topological domain, extracellular. A helical membrane pass occupies residues G358 to G378. Over T379–R398 the chain is Cytoplasmic. Residues V399–P419 traverse the membrane as a helical segment. The Extracellular portion of the chain corresponds to Q420–R426. The chain crosses the membrane as a helical span at residues T427 to Y447. Residues T448 to T459 lie on the Cytoplasmic side of the membrane. Residues G460–M480 form a helical membrane-spanning segment. The Extracellular segment spans residues T481–S487. A helical transmembrane segment spans residues L488–P508. At E509–V552 the chain is on the cytoplasmic side.

Belongs to the major facilitator (TC 2.A.1) superfamily. Organic cation transporter (TC 2.A.1.19) family. Glycosylated. Glycosylation is necessary for proper targeting of the transporter to the plasma membrane.

It is found in the cell membrane. The protein localises to the basolateral cell membrane. The protein resides in the basal cell membrane. Its function is as follows. Involved in the renal elimination of endogenous and exogenous organic anions. Mediates the sodium-independent uptake of p-aminohippurate (PAH), cidofovir, adefovir, 9-(2-phosphonylmethoxyethyl) guanine (PMEG), 9-(2-phosphonylmethoxyethyl) diaminopurine (PMEDAP) and edaravone sulfate. PAH uptake is inhibited by furosemide, steviol, phorbol 12-myristate 13-acetate (PMA), calcium ionophore A23187, benzylpenicillin, furosemide, indomethacin, bumetamide, losartan, probenecid, phenol red, urate, and alpha-ketoglutarate. The sequence is that of Solute carrier family 22 member 6-B (slc22a6-b) from Xenopus laevis (African clawed frog).